The following is a 253-amino-acid chain: Ciliary microtubule associated protein 1B (253 aa).

An STPGR repeat occupies proline 182–arginine 207.

It belongs to the CIMAP family.

The protein localises to the cell projection. The protein resides in the cilium. It is found in the flagellum. The chain is Ciliary microtubule associated protein 1B from Homo sapiens (Human).